The following is a 261-amino-acid chain: MTEDARDLYLDLMKKVLTNLIYRDAPIQTFVYDGEPDADPRLLGRDWPSVAHTMVGLKRLDNLQYCVETVLADGVPGDLVETGVWRGGSSIFMRAVLRAHGDTARRVWVADSFEGMPEVGADSHAVDREMRLHEHNGVLAVPLEQVRANFERYGLLDDQVRFLPGWFKDTLPGAPTGRLAVIRLDGDLYESTTDALENLMPRLSPGGFVIIDDYAIDACRDAVHDYRGRYGISDPISEIDGTGVFWRHTAASARSLQPATV.

Residues 53 to 54 (TM), 81 to 85 (ETGVW), 111 to 115 (DSFEG), Phe-167, 185 to 186 (DG), and Ser-191 each bind S-adenosyl-L-methionine. Mg(2+) is bound at residue Asp-185. Mg(2+) contacts are provided by Asp-212 and Asp-213.

This sequence belongs to the methyltransferase TylF/MycF family. The cofactor is Mg(2+).

The enzyme catalyses 8-demethyl-8-(2,3-di-O-methyl-alpha-L-rhamnosyl)-tetracenomycin C + S-adenosyl-L-methionine = 8-demethyl-8-(2,3,4-tri-O-methyl-alpha-L-rhamnosyl)-tetracenomycin C + S-adenosyl-L-homocysteine + H(+). It participates in antibiotic biosynthesis. Functionally, O-methyltransferase involved in the biosynthesis of the permethylated L-rhamnose moiety of elloramycin, an antitumor polyketide. Mediates the methylation of the hydroxy groups at the 4'-position after the sugar moiety has been attached to the aglycon. This is 8-demethyl-8-(2,3-dimethoxy-alpha-L-rhamnosyl)-tetracenomycin-C 4'-O-methyltransferase from Streptomyces olivaceus.